Here is a 966-residue protein sequence, read N- to C-terminus: Protein STICHEL-like 4 (966 aa).

Disordered regions lie at residues 64–118 (RSLR…DRSS) and 200–237 (RDNAAGNESEMSIASNSVPRGEKYEGEEGGGGRDREQN). Basic and acidic residues predominate over residues 75–84 (LKEDHQDSRE). Over residues 98–108 (PIVSFGTSKVT) the composition is skewed to polar residues. Residues 109 to 118 (PSDEKFDRSS) show a composition bias toward basic and acidic residues. The segment covering 208–217 (SEMSIASNSV) has biased composition (polar residues). Residues 219–236 (RGEKYEGEEGGGGRDREQ) are compositionally biased toward basic and acidic residues. Residue 384–391 (GPNGTGKT) participates in ATP binding. Zn(2+)-binding residues include C403, C412, C415, and C418. Residues 650-678 (SKEDMEKLKQALKTLSESEKQLRVSNDKL) adopt a coiled-coil conformation. The span at 706–717 (FNHTPLTDSDPS) shows a compositional bias: polar residues. The interval 706–733 (FNHTPLTDSDPSNHVVAGTRRDDSKQGF) is disordered.

It belongs to the DnaX/STICHEL family.

This is Protein STICHEL-like 4 from Arabidopsis thaliana (Mouse-ear cress).